A 142-amino-acid chain; its full sequence is Hemoglobin subunit alpha (142 aa).

The Globin domain maps to 2 to 142; it reads VLSAADKTNV…VSTVLTSKYR (141 aa). A Phosphoserine modification is found at serine 4. Lysine 8 is modified (N6-succinyllysine). Threonine 9 is modified (phosphothreonine). Lysine 12 is subject to N6-succinyllysine. Position 17 is an N6-acetyllysine; alternate (lysine 17). Lysine 17 bears the N6-succinyllysine; alternate mark. At lysine 41 the chain carries N6-succinyllysine. Serine 50 is subject to Phosphoserine. Residue histidine 59 coordinates O2. Histidine 88 contacts heme b. Residue serine 103 is modified to Phosphoserine. Threonine 109 carries the phosphothreonine modification. Serine 125 and serine 132 each carry phosphoserine. A phosphothreonine mark is found at threonine 135 and threonine 138. Position 139 is a phosphoserine (serine 139).

The protein belongs to the globin family. Heterotetramer of two alpha chains and two beta chains. As to expression, red blood cells.

Functionally, involved in oxygen transport from the lung to the various peripheral tissues. In terms of biological role, hemopressin acts as an antagonist peptide of the cannabinoid receptor CNR1. Hemopressin-binding efficiently blocks cannabinoid receptor CNR1 and subsequent signaling. This chain is Hemoglobin subunit alpha (HBA), found in Equus przewalskii (Przewalski's horse).